We begin with the raw amino-acid sequence, 503 residues long: Probable protein kinase UbiB (503 aa).

A helical membrane pass occupies residues 13 to 35 (TFYRYRLAGLCASLMGSGWICAL). Positions 120 to 491 (EFETEPIASA…QQRQSLWLAV (372 aa)) constitute a Protein kinase domain. ATP contacts are provided by residues 126–134 (IASASIAQV) and Lys-148. The Proton acceptor role is filled by Asp-283. A helical membrane pass occupies residues 485–502 (QSLWLAVIAVVLLLILLL).

The protein belongs to the ABC1 family. UbiB subfamily.

The protein localises to the cell inner membrane. It participates in cofactor biosynthesis; ubiquinone biosynthesis [regulation]. Functionally, is probably a protein kinase regulator of UbiI activity which is involved in aerobic coenzyme Q (ubiquinone) biosynthesis. This chain is Probable protein kinase UbiB, found in Neisseria meningitidis serogroup A / serotype 4A (strain DSM 15465 / Z2491).